A 142-amino-acid chain; its full sequence is Large ribosomal subunit protein uL11 (142 aa).

This sequence belongs to the universal ribosomal protein uL11 family. Part of the ribosomal stalk of the 50S ribosomal subunit. Interacts with L10 and the large rRNA to form the base of the stalk. L10 forms an elongated spine to which L12 dimers bind in a sequential fashion forming a multimeric L10(L12)X complex. One or more lysine residues are methylated.

In terms of biological role, forms part of the ribosomal stalk which helps the ribosome interact with GTP-bound translation factors. The protein is Large ribosomal subunit protein uL11 of Brucella abortus (strain S19).